A 308-amino-acid polypeptide reads, in one-letter code: Bacitracin transport ATP-binding protein BcrA (308 aa).

Residues 8 to 236 enclose the ABC transporter domain; that stretch reads IETENLTKQY…NRKYTEFDVS (229 aa). 40–47 contributes to the ATP binding site; sequence GRNGAGKT.

The protein belongs to the ABC transporter superfamily. The complex is probably composed of two ATP-binding proteins (BcrA) and two transmembrane proteins (BcrB).

In terms of biological role, essential for high-level bacitracin resistance. Part of the ABC transporter complex BcrAB. Probably responsible for energy coupling to the transport system. In Enterococcus faecalis (Streptococcus faecalis), this protein is Bacitracin transport ATP-binding protein BcrA.